We begin with the raw amino-acid sequence, 663 residues long: Protein KINESIN LIGHT CHAIN-RELATED 2 (663 aa).

Positions 1-14 (MDVGESNERVKDDS) are enriched in basic and acidic residues. Disordered stretches follow at residues 1-24 (MDVG…RSPL) and 86-146 (GESK…KVSV). The residue at position 19 (Ser19) is a Phosphoserine. Basic and acidic residues predominate over residues 86-100 (GESKKEIILEKKEES). Over residues 102–111 (GEGSLSQKKP) the composition is skewed to polar residues. TPR repeat units lie at residues 147–181 (DEES…ALRA), 200–233 (VMSL…PMIE), 243–276 (FAGC…QRQV), 285–318 (GETC…HKEN), 329–363 (AADR…SSQN), 369–402 (AAVD…FKQG), 411–444 (ALVY…YLKP), 454–487 (ATGF…YANA), 495–528 (AGIE…FRNS), 537–570 (GIAL…LEKE), and 579–612 (LAVY…REEK).

This sequence belongs to the kinesin light chain family.

The sequence is that of Protein KINESIN LIGHT CHAIN-RELATED 2 from Arabidopsis thaliana (Mouse-ear cress).